Consider the following 257-residue polypeptide: Snake venom serine protease rhinocerase 4 (257 aa).

The signal sequence occupies residues 1-17 (VLIRVLANLLVLQLSYA). Residues 18–23 (QKSSEL) constitute a propeptide that is removed on maturation. The Peptidase S1 domain occupies 24-248 (VIGGAECNIN…YTDWIRSIIG (225 aa)). 6 cysteine pairs are disulfide-bonded: cysteine 30/cysteine 162, cysteine 49/cysteine 65, cysteine 97/cysteine 255, cysteine 141/cysteine 209, cysteine 173/cysteine 188, and cysteine 199/cysteine 224. An N-linked (GlcNAc...) asparagine glycan is attached at asparagine 43. Histidine 64 serves as the catalytic Charge relay system. 2 N-linked (GlcNAc...) asparagine glycosylation sites follow: asparagine 78 and asparagine 100. The Charge relay system role is filled by aspartate 109. The Charge relay system role is filled by serine 203. N-linked (GlcNAc...) asparagine glycosylation is present at asparagine 250.

The protein belongs to the peptidase S1 family. Snake venom subfamily. Expressed by the venom gland.

The protein resides in the secreted. Functionally, snake venom serine protease that may act in the hemostasis system of the prey. This Bitis rhinoceros (West African gaboon viper) protein is Snake venom serine protease rhinocerase 4.